The sequence spans 364 residues: B3 domain-containing protein At5g38490 (364 aa).

Residues 148-202 form a disordered region; that stretch reads ASTSSSSLLNLPCLEPSTETKDVPNPNYQSSSPSSCLTGKTNRKRRAVEQRKSGK. The segment at residues 260–364 is a DNA-binding region (TF-B3); the sequence is FQKLIRNDFL…GVLCFALDTE (105 aa).

Its subcellular location is the nucleus. This chain is B3 domain-containing protein At5g38490, found in Arabidopsis thaliana (Mouse-ear cress).